A 254-amino-acid polypeptide reads, in one-letter code: MLAKRIVPCLDVKAGRVVKGVNFVGLRDAGDPVELAKLYNDQGADELVFLDIAATHEERAILIDVVYRTAEQVFIPLTVGGGIGDLDTIQALLDAGADKVSINSAAVRDPELIARAGERFGAQCIVLAIDARARAGGAGWEVYVRGGRTPTGLDAVAWAVEGERRGAGEILLTSMDADGTRAGYDLALTRAVAEAVQLPVIASGGAGNCEHIRTALTEGAAQAALLASLLHYGELTVEQIKAHLAAHGVPVRRG.

Catalysis depends on residues Asp-11 and Asp-130.

It belongs to the HisA/HisF family. Heterodimer of HisH and HisF.

It is found in the cytoplasm. The catalysed reaction is 5-[(5-phospho-1-deoxy-D-ribulos-1-ylimino)methylamino]-1-(5-phospho-beta-D-ribosyl)imidazole-4-carboxamide + L-glutamine = D-erythro-1-(imidazol-4-yl)glycerol 3-phosphate + 5-amino-1-(5-phospho-beta-D-ribosyl)imidazole-4-carboxamide + L-glutamate + H(+). Its pathway is amino-acid biosynthesis; L-histidine biosynthesis; L-histidine from 5-phospho-alpha-D-ribose 1-diphosphate: step 5/9. IGPS catalyzes the conversion of PRFAR and glutamine to IGP, AICAR and glutamate. The HisF subunit catalyzes the cyclization activity that produces IGP and AICAR from PRFAR using the ammonia provided by the HisH subunit. The polypeptide is Imidazole glycerol phosphate synthase subunit HisF (Gloeobacter violaceus (strain ATCC 29082 / PCC 7421)).